The chain runs to 120 residues: NAD(P)H-quinone oxidoreductase subunit 3, chloroplastic (120 aa).

3 helical membrane-spanning segments follow: residues 9 to 29 (IFWAFLIISSLIPILAFLISG), 64 to 84 (MFALVFVVFDVETVFLYPWAM), and 88 to 108 (VLGVSVFIEALIFVLIPIIGS).

The protein belongs to the complex I subunit 3 family. As to quaternary structure, NDH is composed of at least 16 different subunits, 5 of which are encoded in the nucleus.

The protein localises to the plastid. The protein resides in the chloroplast thylakoid membrane. It catalyses the reaction a plastoquinone + NADH + (n+1) H(+)(in) = a plastoquinol + NAD(+) + n H(+)(out). The enzyme catalyses a plastoquinone + NADPH + (n+1) H(+)(in) = a plastoquinol + NADP(+) + n H(+)(out). Its function is as follows. NDH shuttles electrons from NAD(P)H:plastoquinone, via FMN and iron-sulfur (Fe-S) centers, to quinones in the photosynthetic chain and possibly in a chloroplast respiratory chain. The immediate electron acceptor for the enzyme in this species is believed to be plastoquinone. Couples the redox reaction to proton translocation, and thus conserves the redox energy in a proton gradient. In Drimys granadensis, this protein is NAD(P)H-quinone oxidoreductase subunit 3, chloroplastic.